Here is a 381-residue protein sequence, read N- to C-terminus: L-lactate dehydrogenase (381 aa).

The region spanning 1–380 (MIISSASDYR…KPEALVDLSK (380 aa)) is the FMN hydroxy acid dehydrogenase domain. Tyr24 contacts substrate. FMN contacts are provided by Ser106 and Gln127. Tyr129 serves as a coordination point for substrate. An FMN-binding site is contributed by Thr155. Arg164 is a binding site for substrate. FMN is bound at residue Lys251. The active-site Proton acceptor is the His275. Residue Arg278 coordinates substrate. Residue 306-330 (DSGIRNGLDIVRMLALGADATMLGR) coordinates FMN.

The protein belongs to the FMN-dependent alpha-hydroxy acid dehydrogenase family. The cofactor is FMN.

It is found in the cell inner membrane. The enzyme catalyses (S)-lactate + A = pyruvate + AH2. Catalyzes the conversion of L-lactate to pyruvate. Is coupled to the respiratory chain. This chain is L-lactate dehydrogenase, found in Haemophilus influenzae (strain ATCC 51907 / DSM 11121 / KW20 / Rd).